The primary structure comprises 470 residues: Serine hydroxymethyltransferase, cytosolic (470 aa).

Over residues 1 to 11 the composition is skewed to polar residues; sequence MSAYALSQSHR. The tract at residues 1–23 is disordered; the sequence is MSAYALSQSHRQLTEGHLKDTDP. S2 carries the N-acetylserine modification. The span at 12–23 shows a compositional bias: basic and acidic residues; that stretch reads QLTEGHLKDTDP. The residue at position 249 (K249) is an N6-(pyridoxal phosphate)lysine.

It belongs to the SHMT family. As to quaternary structure, homotetramer. The cofactor is pyridoxal 5'-phosphate.

It localises to the cytoplasm. It carries out the reaction (6R)-5,10-methylene-5,6,7,8-tetrahydrofolate + glycine + H2O = (6S)-5,6,7,8-tetrahydrofolate + L-serine. Its pathway is one-carbon metabolism; tetrahydrofolate interconversion. In terms of biological role, interconversion of serine and glycine. This Candida albicans (strain SC5314 / ATCC MYA-2876) (Yeast) protein is Serine hydroxymethyltransferase, cytosolic (SHM2).